A 382-amino-acid chain; its full sequence is MFENFSPSTMLAIKKYAYWLWLLLALSMPFNYWMAQDSAHPAFWAFSLVIAVFGIGPLLDMLFGRDPANPDEETQTPQLLGQGYYVLLTLATVPVLIGTLVWAAGVFVAFQEWGWLGRLGWILSMGTVMGAVGIVVAHELIHKDSALEQAAGGILLAAVCYAGFKVEHVRGHHVHVSTPEDASSARFGQSVYQFLPHAYKYNFLNAWRLEAVRLRKKGLPVFGWQNELIWWYLLSLALLVGFGWAFGWLGMVFFLGQAFVAVTLLEIINYVEHYGLHRRKGEDGRYERTNHTHSWNSNFVFTNLVLFHLQRHSDHHAFAKRPYQVLRHYDDSPQMPSGYAGMVVLALIPPLWRAVMDPKVRAYYAGEEFQLTAEQSERPAAS.

4 consecutive transmembrane segments (helical) span residues 10–30 (MLAI…SMPF), 43–63 (FWAF…DMLF), 90–110 (LATV…FVAF), and 121–141 (WILS…HELI). Positions 138 and 142 each coordinate Fe cation. The chain crosses the membrane as a helical span at residues 146–166 (ALEQAAGGILLAAVCYAGFKV). The Fe cation site is built by H168, H172, and H173. A helical membrane pass occupies residues 236 to 256 (LALLVGFGWAFGWLGMVFFLG). Positions 312, 315, and 316 each coordinate Fe cation.

It belongs to the fatty acid desaturase type 1 family. AlkB subfamily. It depends on Fe(3+) as a cofactor.

It localises to the cell inner membrane. It carries out the reaction octane + 2 reduced [rubredoxin] + O2 + 2 H(+) = 2 oxidized [rubredoxin] + octan-1-ol + H2O. It participates in hydrocarbon metabolism; alkane degradation. Catalyzes the hydroxylation of n-alkanes in the presence of a NADH-rubredoxin reductase and rubredoxin. It preferably hydroxylases C16-C24 hydrocarbons. The sequence is that of Alkane 1-monooxygenase 1 (alkB1) from Pseudomonas aeruginosa (strain ATCC 15692 / DSM 22644 / CIP 104116 / JCM 14847 / LMG 12228 / 1C / PRS 101 / PAO1).